Reading from the N-terminus, the 106-residue chain is UPF0145 protein VCM66_A0911 (106 aa).

Belongs to the UPF0145 family.

In Vibrio cholerae serotype O1 (strain M66-2), this protein is UPF0145 protein VCM66_A0911.